Reading from the N-terminus, the 342-residue chain is AA9 family lytic polysaccharide monooxygenase AA9-X282 (342 aa).

Positions 1 to 18 (MKSFASLLFLAATAAAHA) are cleaved as a signal peptide. Histidine 17 is a binding site for Cu(2+). Phosphothreonine is present on residues threonine 19 and threonine 57. Serine 59 is subject to Phosphoserine. Cysteine 63 and cysteine 181 are oxidised to a cystine. Residue histidine 93 participates in Cu(2+) binding. The O2 site is built by histidine 167 and glutamine 176. Tyrosine 178 is a Cu(2+) binding site. The N-linked (GlcNAc...) asparagine glycan is linked to asparagine 189. An X282 extension region spans residues 233–263 (SPATVANTPYPTTATWNTALQPTTVPTVTPP). Positions 281–302 (VTSQPPVPPTTQQPPVVTPTAP) are disordered. Residues 285–302 (PPVPPTTQQPPVVTPTAP) are compositionally biased toward pro residues. Residues 306–342 (PLQTQYGQCGGQGWNGPTQCQPPYTCTASNQWYHQCL) enclose the CBM1 domain.

The protein belongs to the polysaccharide monooxygenase AA9 family. Requires Cu(2+) as cofactor.

It is found in the secreted. It carries out the reaction [(1-&gt;4)-beta-D-glucosyl]n+m + reduced acceptor + O2 = 4-dehydro-beta-D-glucosyl-[(1-&gt;4)-beta-D-glucosyl]n-1 + [(1-&gt;4)-beta-D-glucosyl]m + acceptor + H2O.. In terms of biological role, lytic polysaccharide monooxygenase (LPMO) that depolymerizes crystalline and amorphous polysaccharides via the oxidation of scissile alpha- or beta-(1-4)-glycosidic bonds, yielding C1 oxidation products. Catalysis by LPMOs requires the reduction of the active-site copper from Cu(II) to Cu(I) by a reducing agent and H(2)O(2) or O(2) as a cosubstrate. Shows only weak binding properties to cellulose, and low cellulolytic oxidative activity which questions the involvement of X282 extension-containing AA9 proteins in the degradation of plant cell wall and opens new avenues as to the divergence of function of some AA9 members. The protein is AA9 family lytic polysaccharide monooxygenase AA9-X282 of Coprinopsis cinerea (strain Okayama-7 / 130 / ATCC MYA-4618 / FGSC 9003) (Inky cap fungus).